Reading from the N-terminus, the 109-residue chain is Putative double-stranded DNA mimic protein KPK_2119 (109 aa).

The protein belongs to the putative dsDNA mimic protein family.

In terms of biological role, may act as a double-stranded DNA (dsDNA) mimic. Probably regulates the activity of a dsDNA-binding protein. This chain is Putative double-stranded DNA mimic protein KPK_2119, found in Klebsiella pneumoniae (strain 342).